The sequence spans 453 residues: uncharacterized protein (453 aa).

Topologically, residues 1–110 (MIQTQSTAIK…KAILRTFNHP (110 aa)) are cytoplasmic. Residues 111–131 (IALTELQFLVSAVLCVGFASI) traverse the membrane as a helical segment. At 132–172 (VNLFRLPRLKHTKFSKALNSFPDGILPEYLDGNFRSSILHK) the chain is on the lumenal side. A helical transmembrane segment spans residues 173-193 (FLVPSKLVLMTTFPMGIFQFI). The Cytoplasmic segment spans residues 194–201 (GHITSHKA). The chain crosses the membrane as a helical span at residues 202-222 (VSMIPVSLVHSVKALSPIITV). The Lumenal segment spans residues 223-234 (GYYKFFEHRYYN). A helical membrane pass occupies residues 235-255 (SMTYYTLLLLIFGVMTTCWST). The Cytoplasmic segment spans residues 256–269 (HGSKRASDNKSGSS). A helical transmembrane segment spans residues 270–290 (LIGLLFAFISMIIFVAQNIFA). The Lumenal portion of the chain corresponds to 291 to 332 (KNILTIRRKVGILPSSSTDDVTSKEGQPSLDKTRFSPLQVDK). A helical transmembrane segment spans residues 333-353 (ITILFYCSCIGFSLTLLPFLT). Over 354–371 (GELMHGGSVINDLTLETV) the chain is Cytoplasmic. Residues 372–392 (ALVAIHGIAHFFQAMLAFQLI) traverse the membrane as a helical segment. Topologically, residues 393-413 (GLLSSINYSVANIMKRIVVIS) are lumenal. A helical transmembrane segment spans residues 414–434 (VALFWETKLNFFQVFGVILTI). Over 435 to 453 (AGLYGYDKWGLSKKDGRQA) the chain is Cytoplasmic.

The protein belongs to the TPT transporter family.

It localises to the membrane. Functionally, able to suppress the functional loss of YPT1. May form a channel. Protein SLY41 is not essential for cell viability. The SLY41 gene is a multicopy suppressor. This is an uncharacterized protein from Saccharomyces cerevisiae (strain ATCC 204508 / S288c) (Baker's yeast).